Here is a 200-residue protein sequence, read N- to C-terminus: Recombination protein RecR (200 aa).

The C4-type zinc-finger motif lies at 57–72 (CRLCRTLTEEELCPQC). One can recognise a Toprim domain in the interval 80-175 (TLLCVVEGPT…VASRIAHGVP (96 aa)).

Belongs to the RecR family.

Functionally, may play a role in DNA repair. It seems to be involved in an RecBC-independent recombinational process of DNA repair. It may act with RecF and RecO. The polypeptide is Recombination protein RecR (Pseudomonas syringae pv. tomato (strain ATCC BAA-871 / DC3000)).